The primary structure comprises 154 residues: Protein X (154 aa).

A mitochondrial targeting sequence region spans residues 68 to 117 (PCALRFTSARRMETTVNAPWNLPTTLHKRTLGLSPRSTTWIEEYIKDCVF).

It belongs to the orthohepadnavirus protein X family. May form homodimer. May interact with host CEBPA, CFLAR, CREB1, DDB1, E4F1, HBXIP, HSPD1/HSP60, NFKBIA, POLR2E and SMAD4. Interacts with host SMC5-SMC6 complex and induces its degradation. Interacts with host TRPC4AP; leading to prevent ubiquitination of TRPC4AP. Interacts with host PLSCR1; this interaction promotes ubiquitination and degradation of HBx and impairs HBx-mediated cell proliferation. A fraction may be phosphorylated in insect cells and HepG2 cells, a human hepatoblastoma cell line. Phosphorylated in vitro by host protein kinase C or mitogen-activated protein kinase. N-acetylated in insect cells.

The protein resides in the host cytoplasm. It localises to the host nucleus. The protein localises to the host mitochondrion. Multifunctional protein that plays a role in silencing host antiviral defenses and promoting viral transcription. Does not seem to be essential for HBV infection. May be directly involved in development of cirrhosis and liver cancer (hepatocellular carcinoma). Most of cytosolic activities involve modulation of cytosolic calcium. The effect on apoptosis is controversial depending on the cell types in which the studies have been conducted. May induce apoptosis by localizing in mitochondria and causing loss of mitochondrial membrane potential. May also modulate apoptosis by binding host CFLAR, a key regulator of the death-inducing signaling complex (DISC). Promotes viral transcription by using the host E3 ubiquitin ligase DDB1 to target the SMC5-SMC6 complex to proteasomal degradation. This host complex would otherwise bind to viral episomal DNA, and prevents its transcription. Moderately stimulates transcription of many different viral and cellular transcription elements. Promoters and enhancers stimulated by HBx contain DNA binding sites for NF-kappa-B, AP-1, AP-2, c-EBP, ATF/CREB, or the calcium-activated factor NF-AT. The polypeptide is Protein X (Homo sapiens (Human)).